The following is a 689-amino-acid chain: Histone-lysine N-methyltransferase MEDEA (689 aa).

Disordered regions lie at residues 1 to 20 (MEKENHEDDGEGLPPELNQI), 51 to 73 (HQSFDLNQPAAEDDNGGDNKSLL), and 169 to 188 (ELSSEEDEEDEEEDEEEIKK). The interval 1–109 (MEKENHEDDG…DEDQDYALEE (109 aa)) is interaction with FIE. A compositionally biased stretch (acidic residues) spans 171 to 184 (SSEEDEEDEEEDEE). One can recognise an SANT domain in the interval 339–389 (NNTMWTPVEKDLYLKGIEIFGRNSCDVALNILRGLKTCLEIYNYMREQDQC). The CXC domain maps to 428-532 (RYPPALKKTT…TLGETPVQIQ (105 aa)). An SET domain is found at 544–659 (KKILIGKSDV…EGEELFFDYC (116 aa)). Positions 666–689 (DWSRGREPRKTGASKRSKEARPAR) are disordered.

This sequence belongs to the class V-like SAM-binding methyltransferase superfamily. Histone-lysine methyltransferase family. EZ subfamily. In terms of assembly, interacts directly with FIE via its N-terminal domain. These two proteins are probably indirectly associated with FIS2. In plants, PcG complexes are probably composed of a member of the EZ family (CLF or MEA), FIE, and a member of the VEFS family (FIS2, VRN2 or EMF2). Interacts with TAF13. Expressed in unpollinated siliques that contain maturing gametophytes. Not expressed at early stages of floral development during early megagametogenesis.

It localises to the nucleus. It catalyses the reaction L-lysyl(27)-[histone H3] + 3 S-adenosyl-L-methionine = N(6),N(6),N(6)-trimethyl-L-lysyl(27)-[histone H3] + 3 S-adenosyl-L-homocysteine + 3 H(+). Polycomb group (PcG) protein. Catalytic subunit of some PcG multiprotein complex, which methylates 'Lys-27' of histone H3, leading to transcriptional repression of the affected target genes. Required to prevent the proliferation of the central cell of the female gametophyte by repressing target genes before fertilization. After fertilization, it probably also regulates the embryo and endosperm proliferation and anteroposterior organization during seed development. PcG proteins act by forming multiprotein complexes, which are required to maintain the transcriptionally repressive state of homeotic genes throughout development. PcG proteins are not required to initiate repression, but to maintain it during later stages of development. Interacts with the promoter and repress the transcription of genes such as PHE1 and PHE2, that are paternally active and maternally silenced genes. In Arabidopsis thaliana (Mouse-ear cress), this protein is Histone-lysine N-methyltransferase MEDEA (MEA).